Here is a 150-residue protein sequence, read N- to C-terminus: Deoxyuridine 5'-triphosphate nucleotidohydrolase (150 aa).

Substrate is bound by residues 69–71 (RSG), asparagine 82, 86–88 (LID), and lysine 96.

Belongs to the dUTPase family. The cofactor is Mg(2+).

The enzyme catalyses dUTP + H2O = dUMP + diphosphate + H(+). It functions in the pathway pyrimidine metabolism; dUMP biosynthesis; dUMP from dCTP (dUTP route): step 2/2. In terms of biological role, this enzyme is involved in nucleotide metabolism: it produces dUMP, the immediate precursor of thymidine nucleotides and it decreases the intracellular concentration of dUTP so that uracil cannot be incorporated into DNA. This Neisseria meningitidis serogroup A / serotype 4A (strain DSM 15465 / Z2491) protein is Deoxyuridine 5'-triphosphate nucleotidohydrolase.